Here is a 196-residue protein sequence, read N- to C-terminus: Holliday junction branch migration complex subunit RuvA (196 aa).

Residues 1-63 (MINKIHGKVI…ENELKLFGFL (63 aa)) form a domain I region. The domain II stretch occupies residues 64-139 (NSDERETFKS…KLLINNELES (76 aa)). Position 139 (serine 139) is a region of interest, flexible linker. The interval 139–196 (SSLFGFKELEESIVSMGFDRKIVNSKLKEACDLIEFSNLKDSEKEQFLFKEVLKRMSN) is domain III.

It belongs to the RuvA family. As to quaternary structure, homotetramer. Forms an RuvA(8)-RuvB(12)-Holliday junction (HJ) complex. HJ DNA is sandwiched between 2 RuvA tetramers; dsDNA enters through RuvA and exits via RuvB. An RuvB hexamer assembles on each DNA strand where it exits the tetramer. Each RuvB hexamer is contacted by two RuvA subunits (via domain III) on 2 adjacent RuvB subunits; this complex drives branch migration. In the full resolvosome a probable DNA-RuvA(4)-RuvB(12)-RuvC(2) complex forms which resolves the HJ.

The protein localises to the cytoplasm. In terms of biological role, the RuvA-RuvB-RuvC complex processes Holliday junction (HJ) DNA during genetic recombination and DNA repair, while the RuvA-RuvB complex plays an important role in the rescue of blocked DNA replication forks via replication fork reversal (RFR). RuvA specifically binds to HJ cruciform DNA, conferring on it an open structure. The RuvB hexamer acts as an ATP-dependent pump, pulling dsDNA into and through the RuvAB complex. HJ branch migration allows RuvC to scan DNA until it finds its consensus sequence, where it cleaves and resolves the cruciform DNA. The sequence is that of Holliday junction branch migration complex subunit RuvA from Borrelia garinii subsp. bavariensis (strain ATCC BAA-2496 / DSM 23469 / PBi) (Borreliella bavariensis).